A 522-amino-acid chain; its full sequence is Protein nucleotidyltransferase YdiU (522 aa).

ATP contacts are provided by Gly109, Gly111, Arg112, Lys132, Asp144, Gly145, Arg195, and Arg202. The Proton acceptor role is filled by Asp271. Mg(2+)-binding residues include Asn272 and Asp281. Asp281 contacts ATP.

This sequence belongs to the SELO family. Mg(2+) serves as cofactor. It depends on Mn(2+) as a cofactor.

It catalyses the reaction L-seryl-[protein] + ATP = 3-O-(5'-adenylyl)-L-seryl-[protein] + diphosphate. It carries out the reaction L-threonyl-[protein] + ATP = 3-O-(5'-adenylyl)-L-threonyl-[protein] + diphosphate. The catalysed reaction is L-tyrosyl-[protein] + ATP = O-(5'-adenylyl)-L-tyrosyl-[protein] + diphosphate. The enzyme catalyses L-histidyl-[protein] + UTP = N(tele)-(5'-uridylyl)-L-histidyl-[protein] + diphosphate. It catalyses the reaction L-seryl-[protein] + UTP = O-(5'-uridylyl)-L-seryl-[protein] + diphosphate. It carries out the reaction L-tyrosyl-[protein] + UTP = O-(5'-uridylyl)-L-tyrosyl-[protein] + diphosphate. Its function is as follows. Nucleotidyltransferase involved in the post-translational modification of proteins. It can catalyze the addition of adenosine monophosphate (AMP) or uridine monophosphate (UMP) to a protein, resulting in modifications known as AMPylation and UMPylation. This is Protein nucleotidyltransferase YdiU from Burkholderia lata (strain ATCC 17760 / DSM 23089 / LMG 22485 / NCIMB 9086 / R18194 / 383).